Consider the following 390-residue polypeptide: Homeobox protein Hox-B2a (390 aa).

4 disordered regions span residues 40–73 (STAI…TASN), 81–100 (TAPP…GAPL), 108–155 (KEKK…LDNV), and 211–338 (MKHK…SLPD). Residues 52-73 (PSLSPCTGNQARPRSQKRTASN) are compositionally biased toward polar residues. Residues 103 to 108 (EFPWMK) carry the Antp-type hexapeptide motif. Residues 118–135 (KPGATAAAAAASPSQASS) are compositionally biased toward low complexity. A DNA-binding region (homeobox) is located at residues 158-217 (SRRLRTAYTNTQLLELEKEFHFNKYLCRPRRVEIAALLDLTERQVKVWFQNRRMKHKRQT). Low complexity predominate over residues 244–262 (SSQSLEVSGSGSAAPSESE). Residues 263 to 290 (TCPTTAAYTNSSDKSQPTPEEGQASQPE) show a composition bias toward polar residues.

The protein belongs to the Antp homeobox family. Proboscipedia subfamily.

The protein resides in the nucleus. In terms of biological role, sequence-specific transcription factor which is part of a developmental regulatory system that provides cells with specific positional identities on the anterior-posterior axis. Plays an important role in the patterning of hindbrain and pharyngeal arches. This chain is Homeobox protein Hox-B2a (hoxb2a), found in Danio rerio (Zebrafish).